Reading from the N-terminus, the 601-residue chain is Elongation factor 4 (601 aa).

The region spanning 6 to 188 (NYIRNFSIVA…AIVTQLPSPR (183 aa)) is the tr-type G domain. Residues 18–23 (DHGKST) and 135–138 (NKVD) each bind GTP.

Belongs to the TRAFAC class translation factor GTPase superfamily. Classic translation factor GTPase family. LepA subfamily.

It is found in the cell inner membrane. The catalysed reaction is GTP + H2O = GDP + phosphate + H(+). Required for accurate and efficient protein synthesis under certain stress conditions. May act as a fidelity factor of the translation reaction, by catalyzing a one-codon backward translocation of tRNAs on improperly translocated ribosomes. Back-translocation proceeds from a post-translocation (POST) complex to a pre-translocation (PRE) complex, thus giving elongation factor G a second chance to translocate the tRNAs correctly. Binds to ribosomes in a GTP-dependent manner. This Bartonella henselae (strain ATCC 49882 / DSM 28221 / CCUG 30454 / Houston 1) (Rochalimaea henselae) protein is Elongation factor 4.